The primary structure comprises 397 residues: Tryptophan synthase beta chain (397 aa).

Lys-91 bears the N6-(pyridoxal phosphate)lysine mark.

Belongs to the TrpB family. As to quaternary structure, tetramer of two alpha and two beta chains. Requires pyridoxal 5'-phosphate as cofactor.

The enzyme catalyses (1S,2R)-1-C-(indol-3-yl)glycerol 3-phosphate + L-serine = D-glyceraldehyde 3-phosphate + L-tryptophan + H2O. It participates in amino-acid biosynthesis; L-tryptophan biosynthesis; L-tryptophan from chorismate: step 5/5. Its function is as follows. The beta subunit is responsible for the synthesis of L-tryptophan from indole and L-serine. This is Tryptophan synthase beta chain from Bacillus cereus (strain G9842).